We begin with the raw amino-acid sequence, 552 residues long: Kumamolisin (552 aa).

Positions 1-17 (MSDMEKPWKEEEKREVL) are enriched in basic and acidic residues. Positions 1–34 (MSDMEKPWKEEEKREVLAGHARRQAPQAVDKGPV) are disordered. Residues 193–546 (AYTPLDVAQA…IRLLQALLPS (354 aa)) enclose the Peptidase S53 domain. Catalysis depends on charge relay system residues Glu-266, Asp-270, and Ser-466. The Ca(2+) site is built by Asp-504, Ile-505, Gly-522, Gly-524, and Asp-526.

As to quaternary structure, forms monomeric and dimeric crystals. Requires Ca(2+) as cofactor. Autocatalytically processed.

The protein resides in the secreted. The catalysed reaction is The enzyme preferentially hydrolyzes peptides having an Ala or Pro residue at P2 position and prefers such charged amino acid residues as Glu or Arg at the P2' position. In the oxidized insulin B chain, kumamolysin preferentially cleaves between Leu(15) and Tyr(16).. Its activity is regulated as follows. Inactivated at 22.4 and 37 degrees Celsius, but not at 60 degrees Celsius, by aldehyde-type inhibitors such as acetyl-Ile-Ala-Phe-CHO and acetyl-Ile-Pro-Phe-CHO. Insensitive to the known carboxyl proteinase inhibitors pepstatin, diazoacetyl-DL-norleucine methyl ester (DAN) and 1,2-epoxy-3-(p-nitrophenoxy)propane (EPNP). Not inhibited by Ala-Ala-Phe-chloromethylketone, an inhibitor of the human tripeptidyl-peptidase 1. In terms of biological role, thermostable pepstatin-insensitive serine-carboxyl proteinase. Preferentially hydrolyzes synthetic peptides having an Ala or Pro residue at the P2 position and charged amino acids such as Glu or Arg at the P2' position. In vitro, specifically hydrolyzes the Leu-15-Tyr-16 peptide bond in oxidized insulin B-chain. Additional cleavage of oxidized insulin B-chain at Phe-25-Tyr-26 is detected at a considerably lower rate. Can hydrolyze collagen and the chromogenic substrate azocoll. Shows lower activity with albumin and casein. Shows very weak tripeptidyl peptidase activity. This chain is Kumamolisin, found in Bacillus sp. (strain MN-32).